A 474-amino-acid chain; its full sequence is MTLRLYDSATRAVRDFEPLEPGKVGIYLCGATVQGEPHVGHLRSVIAFDVLVRWLRRSGLDVTMIRNVTDIDDKILAKSAEAGVPWWAWAYRHERAFSDAYDAVGNLPPTYEPRATGHVVEMIELMQRLVDRGNAYRGKDGNVWFDVRSLADYGSLTRQKLENMSTLEEESSDKADPHDFALWKGLKPGDPETASWETPFGRGRPGWHLECSAMAYRYLGETFDIHGGGIDLRFPHHENEQAQSHAAGYGFARYWLHNAWVTAGGEKMSKSLGNYLTAAEALGRVPAVVLRYALASVHYRSSVEFTEATLAEARVTWERIAGFVTRAAELTGPVGDDGAARLADVVLPIAFVEAMDDDLNVSAALAVLHEHIRLGNTALSSGEAGDAAAELSAVRGMLDVLGLDPLAEPWVGEASATPLRGAVDVLVEGVLADRSAARAAKDWARADALRDQLAAAGVVVEDSPSGARWTIKGT.

C29 lines the Zn(2+) pocket. The 'HIGH' region signature appears at 31–41 (ATVQGEPHVGH). Zn(2+) is bound by residues C211, H236, and E240. The short motif at 267 to 271 (KMSKS) is the 'KMSKS' region element. ATP is bound at residue K270.

It belongs to the class-I aminoacyl-tRNA synthetase family. As to quaternary structure, monomer. Requires Zn(2+) as cofactor.

The protein resides in the cytoplasm. It carries out the reaction tRNA(Cys) + L-cysteine + ATP = L-cysteinyl-tRNA(Cys) + AMP + diphosphate. This is Cysteine--tRNA ligase from Beutenbergia cavernae (strain ATCC BAA-8 / DSM 12333 / CCUG 43141 / JCM 11478 / NBRC 16432 / NCIMB 13614 / HKI 0122).